A 237-amino-acid chain; its full sequence is CDP-diacylglycerol--serine O-phosphatidyltransferase (237 aa).

A run of 8 helical transmembrane segments spans residues 3–23, 25–45, 73–93, 95–115, 124–144, 150–170, 184–204, and 207–227; these read INPLYLFPNLFTASSIFLGMM, IFYASSYQFVMACWLVVASLI, VIAFGVAPSLIAYFYVGYNFG, IGMAVSALFVIFGAIRLARFN, YSFIGIPIPAAAVLVVLCVLL, FLEGNTEKLFLSFIVLLGVLM, WNLKLFILVLIFLSLVFVRPL, and LSVFMGLYLIYGIIRWLFLMV.

It belongs to the CDP-alcohol phosphatidyltransferase class-I family.

It localises to the cell membrane. It carries out the reaction a CDP-1,2-diacyl-sn-glycerol + L-serine = a 1,2-diacyl-sn-glycero-3-phospho-L-serine + CMP + H(+). This chain is CDP-diacylglycerol--serine O-phosphatidyltransferase (pssA), found in Helicobacter pylori (strain ATCC 700392 / 26695) (Campylobacter pylori).